Here is a 212-residue protein sequence, read N- to C-terminus: ATP-dependent dethiobiotin synthetase BioD (212 aa).

13-18 (GIGKTV) serves as a coordination point for ATP. Thr17 contacts Mg(2+). The active site involves Lys33. A substrate-binding site is contributed by Ser37. Glu100 provides a ligand contact to Mg(2+). Residues 100-103 (EGAG), 160-161 (IS), and 184-186 (PLL) contribute to the ATP site.

Belongs to the dethiobiotin synthetase family. As to quaternary structure, homodimer. The cofactor is Mg(2+).

The protein localises to the cytoplasm. It carries out the reaction (7R,8S)-7,8-diammoniononanoate + CO2 + ATP = (4R,5S)-dethiobiotin + ADP + phosphate + 3 H(+). It participates in cofactor biosynthesis; biotin biosynthesis; biotin from 7,8-diaminononanoate: step 1/2. Functionally, catalyzes a mechanistically unusual reaction, the ATP-dependent insertion of CO2 between the N7 and N8 nitrogen atoms of 7,8-diaminopelargonic acid (DAPA, also called 7,8-diammoniononanoate) to form a ureido ring. In Brucella abortus (strain S19), this protein is ATP-dependent dethiobiotin synthetase BioD.